A 1862-amino-acid polypeptide reads, in one-letter code: MAMSLPQLGGAGGPHTQPSLPSLPAHLQSDTHLTAHLASRFHVSHPTARLSSHALISLNTYTNSSKGPDGGKEGSAMAGAEEIADRAFLRLGHRSENQAVVFLGESGAGKSTIRAHLLTALLNKSSTPLSTKLSLAAYVFDSLTTTKTATTPTASKSGLFYELQYDTSATTNPVLIGGKLLDHRLERSRIADVPTGERNFHVLYYLLAGTSEAEKSHLGLDGGSATGTTQKRWKYLGHPTQLKVGINDAEGFQVFKNALRKLEFPRAEIAEICQILASILHIGQLEFETTSQTSVTGDDSGGFSHEGGTTITAVKNKDVLSIIAAFLGVSAADLQTTLGYKTKMIHRERVTVMLDPNGARAHAGELARTLYSLLVAWILETINQRLCAPEESIANTVSIVDFPGFCQQTPTGSALDQLLNNAATECIYNLTLQNFFDRKADMLESEEVSVAATSYFDNSDAVRGILKPGNGLLSILDDQTRRNRTDMQFLEALRRRFDGKNAAIEVGSAQAKLPGSNFMTENTSAVFTVKHFAGEVDYPVKGLIEENGEIISGDLLNMINGTKSEFVARLFGQDALQTVTHPNERTTVMQATVSSKPMRAPSVMSRKTHRTGRPSTAYKRQQQEAMEELDQQSQAGESKKNAKMTLEQGASGQFLASLDNVQKAVTDPGTNSYFVFCLKPNDRRIANQFDSKCVRMQVQTFGIAEISQRLRSADFSLFLPFGEFLGMTDAETILVGSERERAEMVIEEKQWPQNEVRVGATGVFLSERCWMEIAQLGEAVSVSGRYGGLPSSDAGDGLTPAESMAFGASKEHLVSGGNTPLMYGEKAKGGYFTDDTRSEAGVSAFGGGDMFKNLDTREQMAERGNEKSLEEVEEYRDKPSRKRWVALVFFLTWFIPDFAIRLIGRMPRKDVRMAWREKVAINMLIWLMCAVAAFFMVGFPMLICPKQYVYSSNELSSYDGDKGSKGAYVAIRGFVIDLNAFIPNHYPGSNLVSEDTLLNYAGKDISALFPIQVSALCQGKDGQIPPEVTLDNRNTNITGQPQLLASRDIDVNSVYHDFRYFTNDSRPDWYFEQMYTFKHVYLKGRMGYSPKYVKKLARDSSWNVVTIHGKVYDMTKYLQGGLRLKAKAGKPTPNIPGATDFMEDSVVQLFRSAKGQDVSKYWDNIKLSPVKKQRMETCLNNLFYIGDSDTRNSTRCQFATYFILAISVMLASILVFKFLAALQFGGKNVPENLDKFVMCMIPAYTEDEDSLRRAIDSLSRMKYDDKRKLLVVVCDGMIIGQGNDRPTPRIVLDILGVSETVDPEPLSFESLGEGMKQHNMGKIYSGLYEVQGHIVPFMVIVKVGKPSEVSRPGNRGKRDSQMVLMRFLNRVHYNLAMSPMELEMYHQIRNIIGVNPTFYEYLFQIDADTVVAADSATRMISAFIDDTRLIACCGETALTNAKGSFITMIQVYEYWISHNLSKAFESLFGSVTCLPGCFSMYRIRAAETGKPLFVSKEIVEDYSTIRVDTLHMKNLLHLGEDRYLTTLLLKYHSKYKTKYLFSAQAWTIAPDSWSVFLSQRRRWINSTVHNLAELIPLAQLCGFCCFSMRFVVFIDLLSTIVQPVIVMYIVYLIYQVATNPSVVPITAFLLLGAIYGLQAVIFILRRKWEMVGWMIMYIAAIPVFSFGLPLYSFWHMDDFNWGNTRVIAGEAGKKIVVSDEGKFDPNSIPRKKWEEYQAELWETQTQTARDDVRSEISGYSYATKAQGPFSEYGGGYQPSRPGSTAGFGHQNMSRMSLAHSEMPGNRASQFGGSQFFSPEDLVGMPSDDALLAEIRDILKTADLMTVTKKGIKQELERRFNVPLDAKRAYINSATEALLSGQL.

Positions 1–26 (MAMSLPQLGGAGGPHTQPSLPSLPAH) are disordered. The 778-residue stretch at 1–778 (MAMSLPQLGG…CWMEIAQLGE (778 aa)) folds into the Myosin motor domain. N-linked (GlcNAc...) asparagine glycosylation occurs at Asn-63. 104-111 (GESGAGKS) is an ATP binding site. Asn-123, Asn-429, Asn-483, Asn-522, and Asn-560 each carry an N-linked (GlcNAc...) asparagine glycan. Residues 592–643 (TVSSKPMRAPSVMSRKTHRTGRPSTAYKRQQQEAMEELDQQSQAGESKKNAK) form a disordered region. Residues 658-682 (LDNVQKAVTDPGTNSYFVFCLKPND) form an actin-binding region. 2 helical membrane passes run 884 to 904 (WVAL…RLIG) and 923 to 943 (MLIW…PMLI). The Cytochrome b5 heme-binding domain maps to 947-1009 (QYVYSSNELS…YAGKDISALF (63 aa)). N-linked (GlcNAc...) asparagine glycans are attached at residues Asn-1036, Asn-1063, and Asn-1192. A helical membrane pass occupies residues 1202-1222 (FILAISVMLASILVFKFLAAL). 2 N-linked (GlcNAc...) asparagine glycosylation sites follow: Asn-1459 and Asn-1565. Helical transmembrane passes span 1590–1610 (FVVF…MYIV), 1623–1643 (VPIT…VIFI), and 1650–1670 (MVGW…GLPL). Asn-1771 is a glycosylation site (N-linked (GlcNAc...) asparagine). In terms of domain architecture, DEK-C spans 1804–1859 (MPSDDALLAEIRDILKTADLMTVTKKGIKQELERRFNVPLDAKRAYINSATEALLS).

In the N-terminal section; belongs to the TRAFAC class myosin-kinesin ATPase superfamily. Myosin family. This sequence in the C-terminal section; belongs to the chitin synthase family. Class V subfamily.

It is found in the cell membrane. It catalyses the reaction [(1-&gt;4)-N-acetyl-beta-D-glucosaminyl](n) + UDP-N-acetyl-alpha-D-glucosamine = [(1-&gt;4)-N-acetyl-beta-D-glucosaminyl](n+1) + UDP + H(+). Polymerizes chitin, a structural polymer of the cell wall and septum, by transferring the sugar moiety of UDP-GlcNAc to the non-reducing end of the growing chitin polymer. ChsV and chsVb do perform additive, but not redundant, functions in septum formation. Involved in cell wall integrity and resistance to antimicrobial plant defense compounds such as the tomato phytoanticipin alpha-tomatine or H(2)O(2), and plays a crucial role in vascular colonization and pathogenicity. Also plays an important role in nuclear sorting or distribution. The chain is Chitin synthase V from Fusarium oxysporum f. sp. lycopersici (strain 4287 / CBS 123668 / FGSC 9935 / NRRL 34936) (Fusarium vascular wilt of tomato).